A 130-amino-acid chain; its full sequence is Holo-[acyl-carrier-protein] synthase (130 aa).

Mg(2+)-binding residues include Asp-9 and Glu-58.

It belongs to the P-Pant transferase superfamily. AcpS family. Mg(2+) is required as a cofactor.

It is found in the cytoplasm. The enzyme catalyses apo-[ACP] + CoA = holo-[ACP] + adenosine 3',5'-bisphosphate + H(+). Transfers the 4'-phosphopantetheine moiety from coenzyme A to a Ser of acyl-carrier-protein. This Mycobacterium sp. (strain JLS) protein is Holo-[acyl-carrier-protein] synthase.